A 628-amino-acid chain; its full sequence is Kelch-like protein 14 (628 aa).

The 119-residue stretch at C33–L151 folds into the BTB domain. The tract at residues G69–L115 is disordered. Positions Q84–Q96 are enriched in low complexity. The BACK domain occupies V210 to Q279. 6 Kelch repeats span residues M323–N372, F373–K424, H425–G471, I473–D518, L520–D570, and I572–L620.

As to quaternary structure, interacts with TOR1A, preferentially with the ATP-free form.

It is found in the cytoplasm. Its subcellular location is the cytosol. The protein localises to the endoplasmic reticulum membrane. The protein is Kelch-like protein 14 (KLHL14) of Homo sapiens (Human).